Consider the following 545-residue polypeptide: MFVLNEFTRRGFLGTAAAVGGTTVVTTALGGAPAAQAAVPEAADGGACGARTALVKVDRVDRRYQDLVTRGFNGRFRGRPDVVYVVHTADQVVDAVNQAMAAGQRIAVRSGGHCFEGFVDDPAVRAVIDMSQMRQVFYDSGKRAFAVEPGATLGETYRALYLDWGVTIPAGVCPQVGVGGHVLGGGYGPLSRRDGVVADHLYAVEVVVVDASGRARKVVATSAADDPNRELWWAHTGGGGGNFGIVTRYWFRTPGATGTDPSQLLPKAPTSTLRHIVTWDWSALTEEAFTRIIDNHGAWHQSNSAAGTPYASMHSVFYLNSRAAGQILLDIQIDGGLDGAEALLNDFVAAVNEGTGVEPAVQRSTEPWLRATLANKFDTGGFDRTKSKGAYLRKPWTAAQAATLYRHLSADSQVWGEVSLYSYGGKVNSVPETATATAQRDSIIKVWMSATWMDPAHDDANLAWIREIYREIFATTGGVPVPDDRTEGTFINYPDVDLVDERWNTSGVPWYTLYYKGNYPRLQKVKARWDPRDVFRHALSVRPPG.

The segment at residues 1 to 43 (MFVLNEFTRRGFLGTAAAVGGTTVVTTALGGAPAAQAAVPEAA) is a signal peptide (tat-type signal). Positions 76 to 256 (FRGRPDVVYV…TRYWFRTPGA (181 aa)) constitute an FAD-binding PCMH-type domain. Residues 113 to 173 (HCFEGFVDDP…WGVTIPAGVC (61 aa)) constitute a cross-link (6-(S-cysteinyl)-8alpha-(pros-histidyl)-FAD (His-Cys)). Tyrosine 421 functions as the Proton acceptor in the catalytic mechanism. Threonine 451 lines the aclacinomycin Y pocket. Asparagine 492 contributes to the FAD binding site. The Proton acceptor role is filled by tyrosine 493. Tyrosine 493 lines the aclacinomycin Y pocket.

It belongs to the oxygen-dependent FAD-linked oxidoreductase family. Homotetramer; dimer of dimers. FAD serves as cofactor. Predicted to be exported by the Tat system. The position of the signal peptide cleavage has been experimentally proven. In terms of processing, the FAD cofactor is bound via a bicovalent 6-S-cysteinyl, 8alpha-N1-histidyl FAD linkage.

It carries out the reaction aclacinomycin N + O2 = aclacinomycin A + H2O2. It catalyses the reaction aclacinomycin A + O2 = aclacinomycin Y + H2O2. Its activity is regulated as follows. Inhibited by ascorbic acid and iron ion. Its function is as follows. Involved in the modification of the terminal sugar residues in the last two steps in the biosynthesis of polyketide antibiotics of the aclacinomycin group. In the first reaction, it catalyzes the oxidation of the hydroxyl group at carbon C4 of the L-rhodinose terminal sugar moiety of aclacinomycin N (AclN) to a keto group, modifying the sugar to cinerulose A and generating aclacinomycin A (AclA). In the second reaction, it catalyzes the elimination of two hydrogen atoms from cinerulose A, leading to a double bond between carbon atoms C2 and C3 and the generation of the L-aculose terminal sugar moiety of aclacinomycin Y (AclY). It can also use aclacinomycin analogs, epsilon-pyrromycinone glycosides, rhodirubins (A, B, C and E) and all triglycosides containing L-cinerulose, L-rhodinose or 2-deoxy-L-fucose as terminal sugar. This Streptomyces galilaeus protein is Aclacinomycin-N/aclacinomycin-A oxidase.